We begin with the raw amino-acid sequence, 225 residues long: 2-C-methyl-D-erythritol 4-phosphate cytidylyltransferase (225 aa).

The protein belongs to the IspD/TarI cytidylyltransferase family. IspD subfamily.

The enzyme catalyses 2-C-methyl-D-erythritol 4-phosphate + CTP + H(+) = 4-CDP-2-C-methyl-D-erythritol + diphosphate. Its pathway is isoprenoid biosynthesis; isopentenyl diphosphate biosynthesis via DXP pathway; isopentenyl diphosphate from 1-deoxy-D-xylulose 5-phosphate: step 2/6. Its function is as follows. Catalyzes the formation of 4-diphosphocytidyl-2-C-methyl-D-erythritol from CTP and 2-C-methyl-D-erythritol 4-phosphate (MEP). In Prochlorococcus marinus (strain NATL2A), this protein is 2-C-methyl-D-erythritol 4-phosphate cytidylyltransferase.